The following is an 81-amino-acid chain: Omega-conotoxin-like TxO4 (81 aa).

A signal peptide spans 1 to 22 (MKLTCVVIVAVLFLTAWTFVTA). The propeptide occupies 23 to 52 (VPHSSNALENLYLKARHEMENPEASKLNTR). Cystine bridges form between C55-C72, C62-C76, and C71-C80. Residue P70 is modified to 4-hydroxyproline; partial. W75 carries the 6'-bromotryptophan; partial modification.

Belongs to the conotoxin O1 superfamily. In terms of processing, txO4 is found with and without hydroxyproline and these two forms have a bromotryptophan. Truncated TxO4 is found with and without bromotryptophan, and these two forms have no hydroxyproline. Expressed by the venom duct.

It is found in the secreted. Its function is as follows. Omega-conotoxins act at presynaptic membranes, they bind and block voltage-gated calcium channels (Cav). The chain is Omega-conotoxin-like TxO4 from Conus textile (Cloth-of-gold cone).